The following is a 52-amino-acid chain: Venom peptide 4b (52 aa).

Positions 1-23 (MRSAILLVIVAIVAILGFLGVNA) are cleaved as a signal peptide. AXPX repeat units follow at residues 23–26 (AEPL), 31–34 (AEPN), and 39–42 (AAPL). A propeptide spanning residues 24 to 41 (EPLPSPLAEPNPHAKAAP) is cleaved from the precursor. A disordered region spans residues 30-52 (LAEPNPHAKAAPLSPAAMASLAG). A compositionally biased stretch (low complexity) spans 37-52 (AKAAPLSPAAMASLAG). At Ala51 the chain carries Alanine amide.

Expressed by the venom gland.

It is found in the secreted. This chain is Venom peptide 4b, found in Eumenes pomiformis (Potter wasp).